The following is a 122-amino-acid chain: Ribonuclease P protein component (122 aa).

The protein belongs to the RnpA family. As to quaternary structure, consists of a catalytic RNA component (M1 or rnpB) and a protein subunit.

The enzyme catalyses Endonucleolytic cleavage of RNA, removing 5'-extranucleotides from tRNA precursor.. In terms of biological role, RNaseP catalyzes the removal of the 5'-leader sequence from pre-tRNA to produce the mature 5'-terminus. It can also cleave other RNA substrates such as 4.5S RNA. The protein component plays an auxiliary but essential role in vivo by binding to the 5'-leader sequence and broadening the substrate specificity of the ribozyme. This is Ribonuclease P protein component from Halorhodospira halophila (strain DSM 244 / SL1) (Ectothiorhodospira halophila (strain DSM 244 / SL1)).